Consider the following 663-residue polypeptide: Polyunsaturated fatty acid lipoxygenase ALOX12 (663 aa).

The region spanning Gly-2–Arg-114 is the PLAT domain. One can recognise a Lipoxygenase domain in the interval Leu-115–Ile-663. Residue Ser-246 is modified to Phosphoserine. His-360, His-365, His-540, Asn-544, and Ile-663 together coordinate Fe cation.

It belongs to the lipoxygenase family. Requires Fe cation as cofactor. As to expression, expressed in vascular smooth muscle cells.

Its subcellular location is the cytoplasm. It is found in the cytosol. It localises to the membrane. The catalysed reaction is (5Z,8Z,11Z,14Z)-eicosatetraenoate + O2 = (12S)-hydroperoxy-(5Z,8Z,10E,14Z)-eicosatetraenoate. The enzyme catalyses (5Z,8Z,11Z,14Z)-eicosatetraenoate + O2 = (15S)-hydroperoxy-(5Z,8Z,11Z,13E)-eicosatetraenoate. It catalyses the reaction 2 leukotriene A4 + O2 + 2 H2O = 2 lipoxin A4. It carries out the reaction 2 leukotriene A4 + O2 + 2 H2O = 2 lipoxin B4. The catalysed reaction is (14S)-hydroperoxy-(4Z,7Z,10Z,12E,16Z,19Z)-docosahexaenoate = (13S,14S)-epoxy-(4Z,7Z,9E,11E,16Z,19Z)-docosahexaenoate + H2O. The enzyme catalyses N-(5Z,8Z,11Z,14Z)-eicosatetraenoyl-L-alanine + O2 = N-(15S)-hydroperoxy-(5Z,8Z,11Z,13E)-eicosatetraenoyl-alanine. It catalyses the reaction N-(5Z,8Z,11Z,14Z)-eicosatetraenoyl-L-alanine + O2 = N-(12S)-hydroperoxy-(5Z,8Z,10E,14Z)-eicosatetraenoyl-alanine. It carries out the reaction N-(5Z,8Z,11Z,14Z)-eicosatetraenoyl-gamma-aminobutanoate + O2 = N-(15S)-hydroperoxy-(5Z,8Z,11Z,13E)-eicosatetraenoyl-gamma-aminobutanoate. The catalysed reaction is N-(5Z,8Z,11Z,14Z)-eicosatetraenoyl-gamma-aminobutanoate + O2 = N-(12S)-hydroperoxy-(5Z,8Z,10E,14Z)-eicosatetraenoyl-gamma-aminobutanoate. The enzyme catalyses N-(5Z,8Z,11Z,14Z)-eicosatetraenoyl-glycine + O2 = N-(15S)-hydroperoxy-(5Z,8Z,11Z,13E)-eicosatetraenoyl-glycine. It catalyses the reaction N-(5Z,8Z,11Z,14Z)-eicosatetraenoyl-glycine + O2 = N-(12S)-hydroperoxy-(5Z,8Z,10E,14Z)-eicosatetraenoyl-glycine. It carries out the reaction N-(5Z,8Z,11Z,14Z)-eicosatetraenoyl-taurine + O2 = N-(12S)-hydroperoxy-(5Z,8Z,10E,14Z)-eicosatetraenoyl-taurine. The catalysed reaction is N-(5Z,8Z,11Z,14Z)-eicosatetraenoyl-taurine + O2 = N-(15S)-hydroperoxy-(5Z,8Z,11Z,13E)-eicosatetraenoyl-taurine. The enzyme catalyses (4Z,7Z,10Z,13Z,16Z,19Z)-docosahexaenoate + O2 = (14S)-hydroperoxy-(4Z,7Z,10Z,12E,16Z,19Z)-docosahexaenoate. It catalyses the reaction (7S)-hydroperoxy-(4Z,8E,10Z,13Z,16Z,19Z)-docosahexaenoate + O2 = (7S,14S)-dihydroperoxy-(4Z,8E,10Z,12E,16Z,19Z)-docosahexaenoate. It carries out the reaction (7S)-hydroperoxy-(4Z,8E,10Z,13Z,16Z,19Z)-docosahexaenoate + O2 = (7S,17S)-dihydroperoxy-(4Z,8E,10Z,13Z,15E,19Z)-docosahexaenoate. The catalysed reaction is (5Z,8Z,11Z,14Z,17Z)-eicosapentaenoate + O2 = (12S)-hydroperoxy-(5Z,8Z,10E,14Z,17Z)-eicosapentaenoate. The enzyme catalyses (8Z,11Z,14Z)-eicosatrienoate + O2 = (12S)-hydroperoxy-(8Z,10E,14Z)-eicosatrienoate. It catalyses the reaction (9Z,12Z)-octadecadienoate + O2 = (13S)-hydroperoxy-(9Z,11E)-octadecadienoate. It carries out the reaction (5Z,8Z,11Z)-eicosatrienoate + O2 = (12S)-hydroperoxy-(5Z,8Z,10E)-eicosatrienoate. The catalysed reaction is (14R,15S)-epoxy-(5Z,8Z,11Z)-eicosatrienoate + O2 = (12S)-hydroperoxy-(14R,15S)-epoxy-(5Z,8Z,10E)-eicosatrienoate. The enzyme catalyses (14S,15R)-epoxy-(5Z,8Z,11Z)-eicosatrienoate + O2 = (12S)-hydroperoxy-(14S,15R)-epoxy-(5Z,8Z,10E)-eicosatrienoate. Its pathway is lipid metabolism; hydroperoxy eicosatetraenoic acid biosynthesis. Activated by EGF. Arachidonic acid conversion is inhibited by (13S,14S)-epoxy-(4Z,7Z,9E,11E,16Z,19Z)-docosahexaenoate (13S,14S-epoxy-DHA). Arachidonate 12-lipoxygenase activity is decreased when PH decreases from 7.4 to 6. Catalyzes the regio and stereo-specific incorporation of molecular oxygen into free and esterified polyunsaturated fatty acids generating lipid hydroperoxides that can be further reduced to the corresponding hydroxy species. Mainly converts arachidonate ((5Z,8Z,11Z,14Z)-eicosatetraenoate) to the specific bioactive lipid (12S)-hydroperoxyeicosatetraenoate/(12S)-HPETE. Through the production of bioactive lipids like (12S)-HPETE it regulates different biological processes including platelet activation. It can also catalyze the epoxidation of double bonds of polyunsaturated fatty acids such as (14S)-hydroperoxy-docosahexaenoate/(14S)-HPDHA resulting in the formation of (13S,14S)-epoxy-DHA. Furthermore, it may participate in the sequential oxidations of DHA ((4Z,7Z,10Z,13Z,16Z,19Z)-docosahexaenoate) to generate specialized pro-resolving mediators (SPMs) like resolvin D5 ((7S,17S)-diHPDHA) and (7S,14S)-diHPDHA, that actively down-regulate the immune response and have anti-aggregation properties with platelets. An additional function involves a multistep process by which it transforms leukotriene A4/LTA4 into the bioactive lipids lipoxin A4/LXA4 and lipoxin B4/LXB4, both are vasoactive and LXA4 may regulate neutrophil function via occupancy of specific recognition sites. Can also peroxidize linoleate ((9Z,12Z)-octadecadienoate) to (13S)-hydroperoxyoctadecadienoate/ (13S-HPODE). Due to its role in regulating both the expression of the vascular endothelial growth factor (VEGF, an angiogenic factor involved in the survival and metastasis of solid tumors) and the expression of integrin beta-1 (known to affect tumor cell migration and proliferation), it can be regarded as protumorigenic. Important for cell survival, as it may play a role not only in proliferation but also in the prevention of apoptosis in vascular smooth muscle cells. The protein is Polyunsaturated fatty acid lipoxygenase ALOX12 of Homo sapiens (Human).